The sequence spans 93 residues: MSRSIKKPPFCAPHVLRLVNKAIAQNKLNSIINIHSRSSVILNKFIGLTFGVYNGKTYVPVKVNDNMIGRKFGEFSPTRRYTGHVGDKKVSRK.

The protein belongs to the universal ribosomal protein uS19 family.

In terms of biological role, protein S19 forms a complex with S13 that binds strongly to the 16S ribosomal RNA. The sequence is that of Small ribosomal subunit protein uS19 from Ehrlichia ruminantium (strain Welgevonden).